The following is a 1578-amino-acid chain: FH1/FH2 domain-containing protein 3 (1578 aa).

The GBD/FH3 domain maps to 18–405 (NSTNFPEPSR…DLCEKDEEEE (388 aa)). Disordered regions lie at residues 324 to 518 (HEDG…DKLP), 535 to 824 (SPLL…GVNG), 915 to 942 (VGRG…KTES), 979 to 1013 (LGHR…VPPP), 1418 to 1462 (QQKQ…YAED), 1490 to 1514 (RTRS…PSVT), and 1528 to 1565 (SATQ…PEEA). A phosphoserine mark is found at Ser-345 and Ser-376. Residues 368–383 (IQNIKSPLSAPTSPCS) are compositionally biased toward polar residues. Positions 399–425 (EKDEEEEEEEEQPITEPNSEEEREDDA) are enriched in acidic residues. At Thr-413 the chain carries Phosphothreonine. Positions 434-446 (ASSASGQSSPGKD) are enriched in low complexity. Residues 453 to 473 (ALHTTSSPTSQGRWLSASTAA) show a composition bias toward polar residues. Residues 553 to 583 (SNFSSNSFQSSRPSPGPSGSPSYASSFSSPQ) show a composition bias toward low complexity. The span at 584–598 (DTRSSPSGLLTSSFR) shows a compositional bias: polar residues. The stretch at 597 to 645 (FRQHQESLAAERERRRQEREERLQRIEREERNKFNREYLDKREEQRQAR) forms a coiled coil. The span at 599–651 (QHQESLAAERERRRQEREERLQRIEREERNKFNREYLDKREEQRQARGERYKY) shows a compositional bias: basic and acidic residues. Low complexity-rich tracts occupy residues 675–684 (DLSLDLSLPA) and 692–701 (SSQSPSADSQ). A compositionally biased stretch (acidic residues) spans 751 to 761 (SQEEPVLELEP). The span at 762 to 782 (EERASLSEKERQNEEVNERDN) shows a compositional bias: basic and acidic residues. Over residues 784–793 (SASSISSSSS) the composition is skewed to low complexity. A compositionally biased stretch (basic and acidic residues) spans 795–809 (LEREEKEDKLSEDRA). Ser-921 is subject to Phosphoserine. Residue Thr-933 is modified to Phosphothreonine. Residues 985-1013 (PGPPPPPPPTFLGLPPPPPPPLLDSVPPP) are compositionally biased toward pro residues. An FH1 domain is found at 985 to 1016 (PGPPPPPPPTFLGLPPPPPPPLLDSVPPPPVP). One can recognise an FH2 domain in the interval 1039–1435 (GQPAFTKKKK…HRERNKTRGK (397 aa)). Residues 1420–1434 (KQKRANHRERNKTRG) show a composition bias toward basic residues. Over residues 1444–1456 (SGSSPAAPSQPQG) the composition is skewed to low complexity. The DAD domain occupies 1515-1547 (DDAADEIMDRIVKSATQVPSQRVVPRERKRSRA). The segment covering 1541–1556 (ERKRSRANRKSLRRTL) has biased composition (basic residues).

This sequence belongs to the formin homology family. In terms of assembly, interacts with nestin/NES-based interfilament (IF). Interacts with SQSTM1. Expressed in the heart, including left ventricle, kidney, brain and skeletal muscle, including soleus and tibialis anterior (at protein level).

Its subcellular location is the cytoplasm. It is found in the cytoskeleton. It localises to the myofibril. The protein resides in the sarcomere. The protein localises to the z line. Functionally, may play a role in actin filament polymerization in cardiomyocytes. Actin-organizing protein that may cause stress fiber formation together with cell elongation. This is FH1/FH2 domain-containing protein 3 (Fhod3) from Mus musculus (Mouse).